Here is a 167-residue protein sequence, read N- to C-terminus: Photosystem II extrinsic protein V (167 aa).

Residues 1 to 30 form the signal peptide; sequence MVFKTLRRTLWLTLAALLAVFQFNLGAAQA. The heme c site is built by Cys-67, Cys-70, His-71, and His-122.

Belongs to the cytochrome c family. PsbV subfamily. PSII is composed of 1 copy each of membrane proteins PsbA, PsbB, PsbC, PsbD, PsbE, PsbF, PsbH, PsbI, PsbJ, PsbK, PsbL, PsbM, PsbT, PsbX, PsbY, PsbZ, Psb30/Ycf12, peripheral proteins PsbO, CyanoQ (PsbQ), PsbU, PsbV and a large number of cofactors. It forms dimeric complexes. Heme c is required as a cofactor.

The protein localises to the cellular thylakoid membrane. One of the extrinsic, lumenal subunits of photosystem II (PSII). PSII is a light-driven water plastoquinone oxidoreductase, using light energy to abstract electrons from H(2)O, generating a proton gradient subsequently used for ATP formation. The extrinsic proteins stabilize the structure of photosystem II oxygen-evolving complex (OEC), the ion environment of oxygen evolution and protect the OEC against heat-induced inactivation. Low-potential cytochrome c that plays a role in the OEC of PSII. This is Photosystem II extrinsic protein V from Synechococcus elongatus (strain ATCC 33912 / PCC 7942 / FACHB-805) (Anacystis nidulans R2).